A 360-amino-acid polypeptide reads, in one-letter code: Photosystem II protein D1 (360 aa).

Helical transmembrane passes span 29-46 (YIGW…TATS), 118-133 (HFLL…EWEL), and 142-156 (WIFV…AASA). His118 provides a ligand contact to chlorophyll a. Pheophytin a is bound at residue Tyr126. [CaMn4O5] cluster contacts are provided by Asp170 and Glu189. The chain crosses the membrane as a helical span at residues 197–218 (FHMAGVAGVFGGSLFSAMHGSL). His198 contributes to the chlorophyll a binding site. Residues His215 and 264 to 265 (SF) each bind a quinone. Fe cation is bound at residue His215. His272 serves as a coordination point for Fe cation. Residues 274-288 (FLALWPVVGIWLTAM) traverse the membrane as a helical segment. [CaMn4O5] cluster-binding residues include His332, Glu333, Asp342, and Ala344. A propeptide spanning residues 345-360 (SGEVLPVALTAPAVNG) is cleaved from the precursor.

Belongs to the reaction center PufL/M/PsbA/D family. In terms of assembly, PSII is composed of 1 copy each of membrane proteins PsbA, PsbB, PsbC, PsbD, PsbE, PsbF, PsbH, PsbI, PsbJ, PsbK, PsbL, PsbM, PsbT, PsbX, PsbY, PsbZ, Psb30/Ycf12, at least 3 peripheral proteins of the oxygen-evolving complex and a large number of cofactors. It forms dimeric complexes. The cofactor is The D1/D2 heterodimer binds P680, chlorophylls that are the primary electron donor of PSII, and subsequent electron acceptors. It shares a non-heme iron and each subunit binds pheophytin, quinone, additional chlorophylls, carotenoids and lipids. D1 provides most of the ligands for the Mn4-Ca-O5 cluster of the oxygen-evolving complex (OEC). There is also a Cl(-1) ion associated with D1 and D2, which is required for oxygen evolution. The PSII complex binds additional chlorophylls, carotenoids and specific lipids.. In terms of processing, tyr-161 forms a radical intermediate that is referred to as redox-active TyrZ, YZ or Y-Z. C-terminally processed by CTPA; processing is essential to allow assembly of the oxygen-evolving complex and thus photosynthetic growth.

It localises to the plastid. The protein localises to the chloroplast thylakoid membrane. The enzyme catalyses 2 a plastoquinone + 4 hnu + 2 H2O = 2 a plastoquinol + O2. Its function is as follows. Photosystem II (PSII) is a light-driven water:plastoquinone oxidoreductase that uses light energy to abstract electrons from H(2)O, generating O(2) and a proton gradient subsequently used for ATP formation. It consists of a core antenna complex that captures photons, and an electron transfer chain that converts photonic excitation into a charge separation. The D1/D2 (PsbA/PsbD) reaction center heterodimer binds P680, the primary electron donor of PSII as well as several subsequent electron acceptors. The sequence is that of Photosystem II protein D1 from Phaeodactylum tricornutum (strain CCAP 1055/1).